The following is a 183-amino-acid chain: CyanoP (183 aa).

A signal peptide spans 1 to 19; that stretch reads MLQRFFATALAIFVVLLGG. Cys20 carries N-palmitoyl cysteine lipidation. Cys20 carries the S-diacylglycerol cysteine lipid modification. Positions 31, 34, 54, 58, 63, 87, 91, 142, 163, and 164 each coordinate Zn(2+).

Belongs to the PsbP family. CyanoP subfamily. Monomer. Present in very small amounts in PSII. Requires Zn(2+) as cofactor.

It localises to the cellular thylakoid membrane. Plays a role in the early stages of photosystem II (PSII) assembly; binds to D2 (psbD) and may facilitate its incorporation into PSII. Present in less than 1% of PSII preparations. This chain is CyanoP, found in Thermosynechococcus vestitus (strain NIES-2133 / IAM M-273 / BP-1).